The chain runs to 227 residues: Chalcone--flavanone isomerase (227 aa).

Substrate-binding residues include Thr50, Asn115, and Ser192.

Belongs to the chalcone isomerase family. Fibers.

The catalysed reaction is a chalcone = a flavanone.. It participates in secondary metabolite biosynthesis; flavonoid biosynthesis. Its function is as follows. Catalyzes the intramolecular cyclization of bicyclic chalcones into tricyclic (S)-flavanones. Responsible for the isomerization of 4,2',4',6'-tetrahydroxychalcone (also termed chalcone) into naringenin. This chain is Chalcone--flavanone isomerase (CHI), found in Gossypium hirsutum (Upland cotton).